The following is a 159-amino-acid chain: Small ribosomal subunit protein uS7m (159 aa).

The protein belongs to the universal ribosomal protein uS7 family. As to quaternary structure, part of the small ribosomal subunit.

Its subcellular location is the mitochondrion. One of the primary rRNA binding proteins, it binds directly to the small rRNA where it nucleates assembly of the head domain of the small subunit. This Reclinomonas americana protein is Small ribosomal subunit protein uS7m (RPS7).